The sequence spans 338 residues: Ketol-acid reductoisomerase (NADP(+)) (338 aa).

Residues 1–181 (MKVFYDNDAD…GGTRAGVIET (181 aa)) enclose the KARI N-terminal Rossmann domain. Residues 24-27 (YGSQ), arginine 47, serine 50, serine 52, and 82-85 (DEGQ) contribute to the NADP(+) site. The active site involves histidine 107. Glycine 133 lines the NADP(+) pocket. Positions 182–327 (SFREETETDL…SKLRSMMTWI (146 aa)) constitute a KARI C-terminal knotted domain. Residues aspartate 190, glutamate 194, glutamate 226, and glutamate 230 each coordinate Mg(2+). Serine 251 contacts substrate.

The protein belongs to the ketol-acid reductoisomerase family. The cofactor is Mg(2+).

The catalysed reaction is (2R)-2,3-dihydroxy-3-methylbutanoate + NADP(+) = (2S)-2-acetolactate + NADPH + H(+). It catalyses the reaction (2R,3R)-2,3-dihydroxy-3-methylpentanoate + NADP(+) = (S)-2-ethyl-2-hydroxy-3-oxobutanoate + NADPH + H(+). It functions in the pathway amino-acid biosynthesis; L-isoleucine biosynthesis; L-isoleucine from 2-oxobutanoate: step 2/4. Its pathway is amino-acid biosynthesis; L-valine biosynthesis; L-valine from pyruvate: step 2/4. In terms of biological role, involved in the biosynthesis of branched-chain amino acids (BCAA). Catalyzes an alkyl-migration followed by a ketol-acid reduction of (S)-2-acetolactate (S2AL) to yield (R)-2,3-dihydroxy-isovalerate. In the isomerase reaction, S2AL is rearranged via a Mg-dependent methyl migration to produce 3-hydroxy-3-methyl-2-ketobutyrate (HMKB). In the reductase reaction, this 2-ketoacid undergoes a metal-dependent reduction by NADPH to yield (R)-2,3-dihydroxy-isovalerate. This is Ketol-acid reductoisomerase (NADP(+)) from Acidithiobacillus ferrooxidans (strain ATCC 23270 / DSM 14882 / CIP 104768 / NCIMB 8455) (Ferrobacillus ferrooxidans (strain ATCC 23270)).